The sequence spans 505 residues: Probable alpha-L-arabinofuranosidase C (505 aa).

N-linked (GlcNAc...) asparagine glycosylation is found at asparagine 152, asparagine 269, and asparagine 438.

Belongs to the glycosyl hydrolase 51 family.

It is found in the secreted. The enzyme catalyses Hydrolysis of terminal non-reducing alpha-L-arabinofuranoside residues in alpha-L-arabinosides.. The protein operates within glycan metabolism; L-arabinan degradation. Functionally, alpha-L-arabinofuranosidase involved in the degradation of arabinoxylan, a major component of plant hemicellulose. Acts only on small linear 1,5-alpha-linked L-arabinofuranosyl oligosaccharides. The protein is Probable alpha-L-arabinofuranosidase C (abfC) of Aspergillus clavatus (strain ATCC 1007 / CBS 513.65 / DSM 816 / NCTC 3887 / NRRL 1 / QM 1276 / 107).